A 363-amino-acid chain; its full sequence is MTIYNFSAGPAVLPKPVLERAQAEFLDYNGSGMSVLEMSHRSKDFDDIIKGAEATLRELMAIPDNYKVIFLQGGASLEFTMIPLNFAQGKKAYYLVGGSWGKKAYTEAVKLSKTIAFEPILLGSTEDITYAELPTFDKNDIDPTAAYVHLTTNNTIEGTAVYDIPDTNGVPVIADMSSNILAARYNVEDFAMIYAGAQKNIGPAGVTVVIVREDFLNDQPMLSSMLDYRIQAENDSLYNTPPAYSIYISKLVFEWVKEIGGVDEMEKINREKSGLLYDYIDQSNFYTNPVRKKEERSVANIPFVSPSEELDAKFVKEATAAGFKNIKGHRSVGGMRASLYNAFPRQGVVELIEFMKKFAVENA.

Residue Arg-41 participates in L-glutamate binding. Residues 75–76, Trp-100, Thr-155, Asp-175, and Gln-198 each bind pyridoxal 5'-phosphate; that span reads AS. At Lys-199 the chain carries N6-(pyridoxal phosphate)lysine. Position 239 to 240 (239 to 240) interacts with pyridoxal 5'-phosphate; that stretch reads NT.

Belongs to the class-V pyridoxal-phosphate-dependent aminotransferase family. SerC subfamily. As to quaternary structure, homodimer. The cofactor is pyridoxal 5'-phosphate.

It localises to the cytoplasm. The enzyme catalyses O-phospho-L-serine + 2-oxoglutarate = 3-phosphooxypyruvate + L-glutamate. The catalysed reaction is 4-(phosphooxy)-L-threonine + 2-oxoglutarate = (R)-3-hydroxy-2-oxo-4-phosphooxybutanoate + L-glutamate. It functions in the pathway amino-acid biosynthesis; L-serine biosynthesis; L-serine from 3-phospho-D-glycerate: step 2/3. In terms of biological role, catalyzes the reversible conversion of 3-phosphohydroxypyruvate to phosphoserine and of 3-hydroxy-2-oxo-4-phosphonooxybutanoate to phosphohydroxythreonine. The sequence is that of Phosphoserine aminotransferase from Streptococcus suis (strain 98HAH33).